The primary structure comprises 172 residues: RNA silencing suppressor p19 (172 aa).

Positions 1-20 are enriched in basic and acidic residues; the sequence is MERAIQGNDAREQANSERWD. Residues 1–37 form a disordered region; it reads MERAIQGNDAREQANSERWDGGSGGTTSPFKLPDESP.

It belongs to the tombusvirus protein p19 family. As to quaternary structure, homodimer.

Functionally, viral suppressor of RNA silencing which binds specifically to silencing RNAs (siRNAs). Acts as a molecular caliper to specifically select siRNAs based on the length of the duplex region of the RNA. The protein is RNA silencing suppressor p19 of Tomato bushy stunt virus (strain Ja6) (TBSV).